The sequence spans 741 residues: Methionine--tRNA ligase (741 aa).

The short motif at 11–21 is the 'HIGH' region element; sequence PYANGPIHAGH. Residues Cys143, Cys146, Cys156, and Cys159 each contribute to the Zn(2+) site. The short motif at 345-349 is the 'KMSKS' region element; the sequence is KFSTS. Thr348 is a binding site for ATP. One can recognise a tRNA-binding domain in the interval 641-741; the sequence is EFAKLDLRVG…KEVKLGARIR (101 aa).

The protein belongs to the class-I aminoacyl-tRNA synthetase family. MetG type 1 subfamily. Homodimer. The cofactor is Zn(2+).

Its subcellular location is the cytoplasm. It catalyses the reaction tRNA(Met) + L-methionine + ATP = L-methionyl-tRNA(Met) + AMP + diphosphate. Functionally, is required not only for elongation of protein synthesis but also for the initiation of all mRNA translation through initiator tRNA(fMet) aminoacylation. This Thermococcus kodakarensis (strain ATCC BAA-918 / JCM 12380 / KOD1) (Pyrococcus kodakaraensis (strain KOD1)) protein is Methionine--tRNA ligase.